The following is a 128-amino-acid chain: Cytochrome c-type biogenesis protein CcmE (128 aa).

Residues 1 to 8 (MQKRVRNR) lie on the Cytoplasmic side of the membrane. Residues 9 to 29 (LITIIICFCSACLGISIILYN) form a helical; Signal-anchor for type II membrane protein membrane-spanning segment. Residues 30 to 128 (LEKNIVFFLP…KHDENYRPPQ (99 aa)) lie on the Extracellular side of the membrane. Residues H120 and Y124 each coordinate heme.

The protein belongs to the CcmE/CycJ family.

It localises to the cell membrane. Functionally, heme chaperone required for the biogenesis of c-type cytochromes. Transiently binds heme delivered by CcmC and transfers the heme to apo-cytochromes in a process facilitated by CcmF and CcmH. This Rickettsia africae (strain ESF-5) protein is Cytochrome c-type biogenesis protein CcmE.